Here is a 128-residue protein sequence, read N- to C-terminus: Phosphoribosyl-AMP cyclohydrolase (128 aa).

Aspartate 77 contributes to the Mg(2+) binding site. Residue cysteine 78 participates in Zn(2+) binding. Residues aspartate 79 and aspartate 81 each coordinate Mg(2+). Positions 95 and 102 each coordinate Zn(2+).

Belongs to the PRA-CH family. As to quaternary structure, homodimer. Mg(2+) serves as cofactor. The cofactor is Zn(2+).

Its subcellular location is the cytoplasm. It catalyses the reaction 1-(5-phospho-beta-D-ribosyl)-5'-AMP + H2O = 1-(5-phospho-beta-D-ribosyl)-5-[(5-phospho-beta-D-ribosylamino)methylideneamino]imidazole-4-carboxamide. It participates in amino-acid biosynthesis; L-histidine biosynthesis; L-histidine from 5-phospho-alpha-D-ribose 1-diphosphate: step 3/9. In terms of biological role, catalyzes the hydrolysis of the adenine ring of phosphoribosyl-AMP. The chain is Phosphoribosyl-AMP cyclohydrolase from Methylococcus capsulatus (strain ATCC 33009 / NCIMB 11132 / Bath).